The primary structure comprises 437 residues: Xylose isomerase (437 aa).

Residues His102 and Asp105 contribute to the active site. Mg(2+)-binding residues include Glu233, Glu269, His272, Asp297, Asp308, Asp310, and Asp340.

It belongs to the xylose isomerase family. Homotetramer. It depends on Mg(2+) as a cofactor.

The protein localises to the cytoplasm. The catalysed reaction is alpha-D-xylose = alpha-D-xylulofuranose. The polypeptide is Xylose isomerase (Novosphingobium aromaticivorans (strain ATCC 700278 / DSM 12444 / CCUG 56034 / CIP 105152 / NBRC 16084 / F199)).